The sequence spans 817 residues: Verprolin (817 aa).

A compositionally biased stretch (pro residues) spans 1 to 15; the sequence is MAGAPAPPPPPPPPA. Positions 1–752 are disordered; sequence MAGAPAPPPP…THTNQPDVDV (752 aa). The 18-residue stretch at 30 to 47 folds into the WH2 1 domain; it reads GRDALLGDIRKGMKLKKA. Residues 37–51 are compositionally biased toward basic and acidic residues; the sequence is DIRKGMKLKKAETND. Low complexity predominate over residues 62 to 79; that stretch reads VSSASGSSGTVSSKGPSM. Residues 87-106 enclose the WH2 2 domain; sequence MGAPQLGDILAGGIPKLKHI. Asn-109 carries N-linked (GlcNAc...) asparagine glycosylation. Positions 119–180 are enriched in pro residues; it reads SAPPIPGAVP…VPSSPAPPLP (62 aa). A glycan (N-linked (GlcNAc...) asparagine) is linked at Asn-212. Pro residues predominate over residues 236–245; sequence PQAPPPPPTP. Over residues 254 to 265 the composition is skewed to polar residues; that stretch reads IKPTDNAVSPPS. Pro residues predominate over residues 306-335; it reads SQPPLPSSAPPIPTSHAPPLPPTAPPPPSL. Low complexity predominate over residues 336 to 348; that stretch reads PNVTSAPKKATSA. A glycan (N-linked (GlcNAc...) asparagine) is linked at Asn-337. Pro residues predominate over residues 372 to 382; that stretch reads PVPPTLAPPLP. N-linked (GlcNAc...) asparagine glycosylation is present at Asn-383. The span at 383 to 395 shows a compositional bias: low complexity; it reads NTTSVPPNKASSM. Over residues 396–407 the composition is skewed to pro residues; the sequence is PAPPPPPPPPPG. Residues 408–422 are compositionally biased toward low complexity; it reads AFSTSSALSASSIPL. The span at 423 to 432 shows a compositional bias: pro residues; it reads APLPPPPPPS. Low complexity predominate over residues 447-469; that stretch reads LTTNKPSASSKQSKISSSSSSSA. Over residues 502 to 516 the composition is skewed to basic and acidic residues; sequence DKQEDVIGSSKDDNV. Low complexity predominate over residues 518 to 534; sequence PSPISPSINPPKQSSQN. Ser-519 carries the post-translational modification Phosphoserine. Residues 557–579 show a composition bias toward pro residues; sequence APPPHTDAMAPPLPPSAPPPPIT. Residues 588 to 597 are compositionally biased toward basic and acidic residues; sequence GDDHTNDKSE. The segment covering 649 to 661 has biased composition (pro residues); it reads PPSPPVAAAPPLP. A compositionally biased stretch (polar residues) spans 713-737; it reads MDTGTSNSPSKNLKQRLFSTGGSTL. Residue Ser-762 is modified to Phosphoserine. N-linked (GlcNAc...) asparagine glycans are attached at residues Asn-784 and Asn-796. Positions 786-806 are disordered; that stretch reads SQMPKPRPFQNKTKLYPSGKG.

The protein belongs to the verprolin family. N-glycosylated.

It is found in the cytoplasm. The protein resides in the cytoskeleton. Involved in cytoskeletal organization and cellular growth. May exert its effects on the cytoskeleton directly, or indirectly via proline-binding proteins (e.g. profilin) or proteins possessing SH3 domains. The polypeptide is Verprolin (VRP1) (Saccharomyces cerevisiae (strain ATCC 204508 / S288c) (Baker's yeast)).